The sequence spans 447 residues: Phosphoglucosamine mutase (447 aa).

Serine 104 serves as the catalytic Phosphoserine intermediate. The Mg(2+) site is built by serine 104, aspartate 243, aspartate 245, and aspartate 247. Serine 104 carries the phosphoserine modification.

Belongs to the phosphohexose mutase family. The cofactor is Mg(2+). Post-translationally, activated by phosphorylation.

The enzyme catalyses alpha-D-glucosamine 1-phosphate = D-glucosamine 6-phosphate. Its function is as follows. Catalyzes the conversion of glucosamine-6-phosphate to glucosamine-1-phosphate. The protein is Phosphoglucosamine mutase of Corynebacterium aurimucosum (strain ATCC 700975 / DSM 44827 / CIP 107346 / CN-1) (Corynebacterium nigricans).